We begin with the raw amino-acid sequence, 531 residues long: Probable bifunctional methylthioribulose-1-phosphate dehydratase/enolase-phosphatase E1 2 (531 aa).

Positions 1–248 (MGVPSEGAVG…AIKLHQLGLD (248 aa)) are methylthioribulose-1-phosphate dehydratase. Position 120 (Cys120) interacts with substrate. His138 and His140 together coordinate Zn(2+). The Proton donor/acceptor; for methylthioribulose-1-phosphate dehydratase activity role is filled by Glu163. A Zn(2+)-binding site is contributed by His213. The segment at 292–531 (ILLDIEGTTT…FRTIETFLEI (240 aa)) is enolase-phosphatase E1. Mg(2+) is bound by residues Asp295 and Glu297. Substrate-binding positions include 430–431 (SS) and Lys464. A Mg(2+)-binding site is contributed by Asp490.

In the N-terminal section; belongs to the aldolase class II family. MtnB subfamily. It in the C-terminal section; belongs to the HAD-like hydrolase superfamily. MasA/MtnC family. The cofactor is Zn(2+). Mg(2+) serves as cofactor.

The enzyme catalyses 5-(methylsulfanyl)-D-ribulose 1-phosphate = 5-methylsulfanyl-2,3-dioxopentyl phosphate + H2O. It catalyses the reaction 5-methylsulfanyl-2,3-dioxopentyl phosphate + H2O = 1,2-dihydroxy-5-(methylsulfanyl)pent-1-en-3-one + phosphate. It participates in amino-acid biosynthesis; L-methionine biosynthesis via salvage pathway; L-methionine from S-methyl-5-thio-alpha-D-ribose 1-phosphate: step 2/6. It functions in the pathway amino-acid biosynthesis; L-methionine biosynthesis via salvage pathway; L-methionine from S-methyl-5-thio-alpha-D-ribose 1-phosphate: step 3/6. The protein operates within amino-acid biosynthesis; L-methionine biosynthesis via salvage pathway; L-methionine from S-methyl-5-thio-alpha-D-ribose 1-phosphate: step 4/6. The protein is Probable bifunctional methylthioribulose-1-phosphate dehydratase/enolase-phosphatase E1 2 of Vitis vinifera (Grape).